Reading from the N-terminus, the 909-residue chain is Protein translocase subunit SecA (909 aa).

ATP contacts are provided by residues Gln-87, 105 to 109, and Asp-513; that span reads GEGKT. The disordered stretch occupies residues 834-909; it reads QEEVERMEEQ…KYKQCHGKID (76 aa). Positions 836–853 are enriched in basic and acidic residues; sequence EVERMEEQRRAQAEEAAR. The span at 854–863 shows a compositional bias: low complexity; the sequence is RAQAQHAAAQ. The segment covering 874–889 has biased composition (basic and acidic residues); the sequence is EGAHQPMVREERKVGR. Zn(2+) is bound by residues Cys-893, Cys-895, Cys-904, and His-905. Residues 899–909 are compositionally biased toward basic residues; that stretch reads KKYKQCHGKID.

The protein belongs to the SecA family. As to quaternary structure, monomer and homodimer. Part of the essential Sec protein translocation apparatus which comprises SecA, SecYEG and auxiliary proteins SecDF-YajC and YidC. Zn(2+) serves as cofactor.

It is found in the cell inner membrane. It localises to the cytoplasm. The enzyme catalyses ATP + H2O + cellular proteinSide 1 = ADP + phosphate + cellular proteinSide 2.. Part of the Sec protein translocase complex. Interacts with the SecYEG preprotein conducting channel. Has a central role in coupling the hydrolysis of ATP to the transfer of proteins into and across the cell membrane, serving both as a receptor for the preprotein-SecB complex and as an ATP-driven molecular motor driving the stepwise translocation of polypeptide chains across the membrane. This Vibrio campbellii (strain ATCC BAA-1116) protein is Protein translocase subunit SecA.